We begin with the raw amino-acid sequence, 315 residues long: tRNA wybutosine-synthesizing protein 5 (315 aa).

The JmjC domain occupies 102 to 267 (DEKYYLRSLG…YDKTDTYGNK (166 aa)). Tyrosine 106 is a 2-oxoglutarate binding site. Fe cation-binding residues include histidine 160 and aspartate 162. Asparagine 166 and lysine 175 together coordinate 2-oxoglutarate. Position 235 (histidine 235) interacts with Fe cation.

It belongs to the TYW5 family. Homodimer. It depends on Fe(2+) as a cofactor.

The catalysed reaction is 7-[(3S)-3-amino-3-carboxypropyl]wyosine(37) in tRNA(Phe) + 2-oxoglutarate + O2 = 7-(2-hydroxy-3-amino-3-carboxypropyl)wyosine(37) in tRNA(Phe) + succinate + CO2. The protein operates within tRNA modification; wybutosine-tRNA(Phe) biosynthesis. Functionally, tRNA hydroxylase that acts as a component of the wybutosine biosynthesis pathway. Wybutosine is a hyper modified guanosine with a tricyclic base found at the 3'-position adjacent to the anticodon of eukaryotic phenylalanine tRNA. Catalyzes the hydroxylation of 7-(a-amino-a-carboxypropyl)wyosine (yW-72) into undermodified hydroxywybutosine (OHyW*). OHyW* being further transformed into hydroxywybutosine (OHyW) by LCMT2/TYW4. OHyW is a derivative of wybutosine found in higher eukaryotes. This chain is tRNA wybutosine-synthesizing protein 5 (TYW5), found in Homo sapiens (Human).